The chain runs to 68 residues: Neuronal regeneration-related protein (68 aa).

The tract at residues 22-54 (EGRLPKGRLPVPKEVNRKKNDETNAASLTPLGS) is disordered. Over residues 44-54 (TNAASLTPLGS) the composition is skewed to polar residues. S59 is subject to Phosphoserine.

As to quaternary structure, interacts with the latency-associated peptides (LAP) of TGFB1 and TGFB2; the interaction results in a decrease in TGFB autoinduction. Interacts with FLNA. In terms of processing, phosphorylated on Ser-59. Phosphorylation decreases stability and activity. Expressed in lung (at protein level).

The protein localises to the cytoplasm. Its function is as follows. May have roles in neural function. Ectopic expression augments motility of gliomas. Also promotes axonal regeneration. May also have functions in cellular differentiation. Induces differentiation of fibroblast into myofibroblast and myofibroblast ameboid migration. Increases retinoic-acid regulation of lipid-droplet biogenesis. Down-regulates the expression of TGFB1 and TGFB2 but not of TGFB3. May play a role in the regulation of alveolar generation. The sequence is that of Neuronal regeneration-related protein (NREP) from Homo sapiens (Human).